The following is a 258-amino-acid chain: Tryptophan synthase alpha chain (258 aa).

Residues Glu-44 and Asp-55 each act as proton acceptor in the active site.

This sequence belongs to the TrpA family. As to quaternary structure, tetramer of two alpha and two beta chains.

It carries out the reaction (1S,2R)-1-C-(indol-3-yl)glycerol 3-phosphate + L-serine = D-glyceraldehyde 3-phosphate + L-tryptophan + H2O. The protein operates within amino-acid biosynthesis; L-tryptophan biosynthesis; L-tryptophan from chorismate: step 5/5. Its function is as follows. The alpha subunit is responsible for the aldol cleavage of indoleglycerol phosphate to indole and glyceraldehyde 3-phosphate. The protein is Tryptophan synthase alpha chain of Petrotoga mobilis (strain DSM 10674 / SJ95).